We begin with the raw amino-acid sequence, 26 residues long: Melittin (26 aa).

An N-formylglycine; partial modification is found at Gly-1. Glu-26 is subject to Glutamic acid 1-amide.

It belongs to the melittin family. In terms of assembly, monomer (in solution and for integration into membranes), homotetramer (in solution and potentially as a toroidal pore in membranes), and potenially homomultimer (as a toroidal pore in membranes). As to expression, expressed by the venom gland.

It is found in the secreted. Its subcellular location is the target cell membrane. Functionally, main toxin of bee venom with strong hemolytic activity and antimicrobial activity. It has enhancing effects on bee venom phospholipase A2 activity. This amphipathic toxin binds to negatively charged membrane surface and forms pore by inserting into lipid bilayers inducing the leakage of ions and molecules and the enhancement of permeability that ultimately leads to cell lysis. It acts as a voltage-gated pore with higher selectivity for anions over cations. The ion conductance has been shown to be voltage-dependent. Self-association of melittin in membranes is promoted by high ionic strength, but not by the presence of negatively charged lipids. In vivo, intradermal injection into healthy human volunteers produce sharp pain sensation and an inflammatory response. It produces pain by activating primary nociceptor cells directly and indirectly due to its ability to activate plasma membrane phospholipase A2 and its pore-forming activity. The polypeptide is Melittin (MELT) (Apis dorsata (Giant honeybee)).